Reading from the N-terminus, the 94-residue chain is MKIKPLGDRVVIKMLESEETTKSGIVLPGSAKEKPQVAEIVAVGPGTVVDGKEVKMEVKVGDRVLTSKYSGTEVKFDGQEYTILKQGDILAIVE.

Belongs to the GroES chaperonin family. In terms of assembly, heptamer of 7 subunits arranged in a ring. Interacts with the chaperonin GroEL.

The protein localises to the cytoplasm. Together with the chaperonin GroEL, plays an essential role in assisting protein folding. The GroEL-GroES system forms a nano-cage that allows encapsulation of the non-native substrate proteins and provides a physical environment optimized to promote and accelerate protein folding. GroES binds to the apical surface of the GroEL ring, thereby capping the opening of the GroEL channel. The sequence is that of Co-chaperonin GroES from Ruminiclostridium cellulolyticum (strain ATCC 35319 / DSM 5812 / JCM 6584 / H10) (Clostridium cellulolyticum).